The sequence spans 310 residues: ADP-L-glycero-D-manno-heptose-6-epimerase (310 aa).

Residues 10–11 (FI), 31–32 (DN), Lys38, Lys53, 75–79 (EGACS), and Asn92 each bind NADP(+). Tyr140 serves as the catalytic Proton acceptor. Lys144 serves as a coordination point for NADP(+). Residue Asn169 participates in substrate binding. The NADP(+) site is built by Val170 and Lys178. The Proton acceptor role is filled by Lys178. Residues Ser180, His187, 201–204 (FEGS), and Arg209 each bind substrate. Lys267 is modified (N6-acetyllysine). Position 272 (Tyr272) interacts with substrate.

It belongs to the NAD(P)-dependent epimerase/dehydratase family. HldD subfamily. As to quaternary structure, homopentamer. The cofactor is NADP(+). NAD(+) serves as cofactor.

The catalysed reaction is ADP-D-glycero-beta-D-manno-heptose = ADP-L-glycero-beta-D-manno-heptose. It functions in the pathway nucleotide-sugar biosynthesis; ADP-L-glycero-beta-D-manno-heptose biosynthesis; ADP-L-glycero-beta-D-manno-heptose from D-glycero-beta-D-manno-heptose 7-phosphate: step 4/4. Its pathway is bacterial outer membrane biogenesis; LPS core biosynthesis. Completely inhibited by ADP and ADP-glucose, and partially inhibited by ATP and NADH. Functionally, catalyzes the interconversion between ADP-D-glycero-beta-D-manno-heptose and ADP-L-glycero-beta-D-manno-heptose via an epimerization at carbon 6 of the heptose. This is ADP-L-glycero-D-manno-heptose-6-epimerase (hldD) from Escherichia coli (strain K12).